We begin with the raw amino-acid sequence, 596 residues long: PDZ and LIM domain protein 5 (596 aa).

Serine 2 bears the N-acetylserine mark. Serine 2 carries the phosphoserine modification. The 84-residue stretch at 2 to 85 (SNYSVSLVGP…SLNMTLQRAS (84 aa)) folds into the PDZ domain. N6-acetyllysine; alternate is present on lysine 89. Lysine 89 is modified (N6-succinyllysine; alternate). Lysine 89 is covalently cross-linked (Glycyl lysine isopeptide (Lys-Gly) (interchain with G-Cter in SUMO2); alternate). Phosphoserine occurs at positions 111, 134, and 137. Disordered regions lie at residues 121 to 165 (NNMA…SPSP), 196 to 240 (AGKT…GPPR), and 255 to 340 (THSD…RPGV). Positions 134–143 (SVSSPKVTSI) are enriched in polar residues. The segment covering 144–165 (PSPSSAFTPAHATTSSHASPSP) has biased composition (low complexity). 2 stretches are compositionally biased toward polar residues: residues 205 to 219 (RQPT…TSQE) and 226 to 237 (RGSQGDSKQQNG). 2 positions are modified to phosphoserine: serine 228 and serine 260. Composition is skewed to basic and acidic residues over residues 258–273 (DASK…DWRP) and 293–304 (EHLKESEADNTK). Polar residues predominate over residues 305–335 (KANNSQEPSPQLASSVASTRSMPESLDSPTS). Residues serine 309, serine 313, and serine 322 each carry the phosphoserine modification. Lysine 350 is modified (N6-acetyllysine). The interval 354–381 (STGVIKSPSWQRPNQGVPSTGRISNSAT) is disordered. Phosphoserine occurs at positions 360 and 362. A compositionally biased stretch (polar residues) spans 361–381 (PSWQRPNQGVPSTGRISNSAT). 3 LIM zinc-binding domains span residues 418–477 (PMCA…FFAP), 477–536 (PECG…LFGT), and 536–596 (TICH…SVNF).

In terms of assembly, interacts with various PKC isoforms through the LIM domains. Interacts with actin and alpha-actinin through the PDZ domain. Interacts (via LIM domains) with SIPA1L1/SPAR; this interaction may occur preferentially with isoform 1. Heart and skeletal muscle specific. Expression is commonly increased in the brain of patients with bipolar disorder, schizophrenia, and major depression.

The protein localises to the postsynaptic density. It is found in the presynapse. The protein resides in the postsynapse. Its subcellular location is the cytoplasm. It localises to the cytosol. May play an important role in the heart development by scaffolding PKC to the Z-disk region. May play a role in the regulation of cardiomyocyte expansion. Isoforms lacking the LIM domains may negatively modulate the scaffolding activity of isoform 1. Overexpression promotes the development of heart hypertrophy. Contributes to the regulation of dendritic spine morphogenesis in neurons. May be required to restrain postsynaptic growth of excitatory synapses. Isoform 1, but not isoform 2, expression favors spine thinning and elongation. The polypeptide is PDZ and LIM domain protein 5 (Homo sapiens (Human)).